The primary structure comprises 121 residues: Small ribosomal subunit protein uS13 (121 aa).

The disordered stretch occupies residues 93–121; the sequence is RGLPMRGQRTRTNARTRKGPRKAAQSLKK.

The protein belongs to the universal ribosomal protein uS13 family. In terms of assembly, part of the 30S ribosomal subunit. Forms a loose heterodimer with protein S19. Forms two bridges to the 50S subunit in the 70S ribosome.

Its function is as follows. Located at the top of the head of the 30S subunit, it contacts several helices of the 16S rRNA. In the 70S ribosome it contacts the 23S rRNA (bridge B1a) and protein L5 of the 50S subunit (bridge B1b), connecting the 2 subunits; these bridges are implicated in subunit movement. Contacts the tRNAs in the A and P-sites. This is Small ribosomal subunit protein uS13 from Albidiferax ferrireducens (strain ATCC BAA-621 / DSM 15236 / T118) (Rhodoferax ferrireducens).